Reading from the N-terminus, the 102-residue chain is RNA-binding protein Hfq (102 aa).

Residues 9 to 68 form the Sm domain; that stretch reads DPFLNALRRERVPVSIYLVNGIKLQGQIESFDQFVILLKNTVSQMVYKHAISTVVPSRPV. Positions 63 to 102 are disordered; the sequence is VPSRPVSHHSNNTGGGSNNYHHGSSPAPSSQPQQDSADAE. A compositionally biased stretch (low complexity) spans 70-102; sequence HHSNNTGGGSNNYHHGSSPAPSSQPQQDSADAE.

Belongs to the Hfq family. Homohexamer.

RNA chaperone that binds small regulatory RNA (sRNAs) and mRNAs to facilitate mRNA translational regulation in response to envelope stress, environmental stress and changes in metabolite concentrations. Also binds with high specificity to tRNAs. In Erwinia tasmaniensis (strain DSM 17950 / CFBP 7177 / CIP 109463 / NCPPB 4357 / Et1/99), this protein is RNA-binding protein Hfq.